Consider the following 215-residue polypeptide: Small ribosomal subunit protein bS6 (215 aa).

Disordered regions lie at residues 121 to 153 (RENNPENPDVPVTSGLASTQPRLSRTEKAQKPK) and 187 to 215 (NQRQNQQNNNNNRFDRNRNRQHNRFKDKQ). A compositionally biased stretch (basic and acidic residues) spans 144–153 (SRTEKAQKPK). A compositionally biased stretch (low complexity) spans 188–198 (QRQNQQNNNNN). Positions 199-215 (RFDRNRNRQHNRFKDKQ) are enriched in basic and acidic residues.

It belongs to the bacterial ribosomal protein bS6 family.

Functionally, binds together with bS18 to 16S ribosomal RNA. This Mycoplasma pneumoniae (strain ATCC 29342 / M129 / Subtype 1) (Mycoplasmoides pneumoniae) protein is Small ribosomal subunit protein bS6 (rpsF).